Reading from the N-terminus, the 321-residue chain is Glucokinase (321 aa).

8–13 serves as a coordination point for ATP; sequence ADIGGT.

The protein belongs to the bacterial glucokinase family.

It localises to the cytoplasm. It catalyses the reaction D-glucose + ATP = D-glucose 6-phosphate + ADP + H(+). The polypeptide is Glucokinase (Paramagnetospirillum magneticum (strain ATCC 700264 / AMB-1) (Magnetospirillum magneticum)).